A 455-amino-acid polypeptide reads, in one-letter code: MANRFAVILAAGQGTRMKSKLHKMLHPVAGRPMVQHVVDQLQQVNLNKIVTIVGFGAEKVKAQLGSSSEFAFQKEQLGTGHAVLQAEDLLKDEKGVTVVACGDTPLIRAETFEELIQYHKKTGAKASILTTKVENPTGYGRVVRNDQDEVERIVEHKDANEGERLIQEINTGTYCFDNQALFAALKEVSNDNAQGEYYLPDVIKILRHQGDTVSAFMTPDFDETIGINDRIALAEAEKIMKKRINEQHMRNGVSIIDPEQTYIEPDVQIESDVILHPGTVLKGETIIRTGAEIGPHSELKDCEVGEDTVIRHSVATSSKVGNRVNIGPYAHIRPESRVGNDTKVGNFVEIKKTNLGDHSKVSHLSYIGDADVGERVNVGCGTITVNYDGTNKYLTTIEDDAFIGCNSNLIAPVTVGKGSYVAAGSTITKNVPENALSIARARQTNKEEYASKFKK.

Positions 1-230 (MANRFAVILA…FDETIGINDR (230 aa)) are pyrophosphorylase. UDP-N-acetyl-alpha-D-glucosamine contacts are provided by residues 9-12 (LAAG), Lys-23, Gln-73, and 78-79 (GT). Asp-103 is a binding site for Mg(2+). Positions 140, 155, 170, and 228 each coordinate UDP-N-acetyl-alpha-D-glucosamine. Asn-228 provides a ligand contact to Mg(2+). Residues 231–251 (IALAEAEKIMKKRINEQHMRN) are linker. Residues 252 to 455 (GVSIIDPEQT…KEEYASKFKK (204 aa)) form an N-acetyltransferase region. Positions 333 and 351 each coordinate UDP-N-acetyl-alpha-D-glucosamine. His-363 functions as the Proton acceptor in the catalytic mechanism. Positions 366 and 377 each coordinate UDP-N-acetyl-alpha-D-glucosamine. Acetyl-CoA is bound by residues 386–387 (NY), Ala-423, and Arg-440.

It in the N-terminal section; belongs to the N-acetylglucosamine-1-phosphate uridyltransferase family. In the C-terminal section; belongs to the transferase hexapeptide repeat family. Homotrimer. Requires Mg(2+) as cofactor.

It localises to the cytoplasm. It carries out the reaction alpha-D-glucosamine 1-phosphate + acetyl-CoA = N-acetyl-alpha-D-glucosamine 1-phosphate + CoA + H(+). It catalyses the reaction N-acetyl-alpha-D-glucosamine 1-phosphate + UTP + H(+) = UDP-N-acetyl-alpha-D-glucosamine + diphosphate. The protein operates within nucleotide-sugar biosynthesis; UDP-N-acetyl-alpha-D-glucosamine biosynthesis; N-acetyl-alpha-D-glucosamine 1-phosphate from alpha-D-glucosamine 6-phosphate (route II): step 2/2. Its pathway is nucleotide-sugar biosynthesis; UDP-N-acetyl-alpha-D-glucosamine biosynthesis; UDP-N-acetyl-alpha-D-glucosamine from N-acetyl-alpha-D-glucosamine 1-phosphate: step 1/1. It participates in bacterial outer membrane biogenesis; LPS lipid A biosynthesis. Catalyzes the last two sequential reactions in the de novo biosynthetic pathway for UDP-N-acetylglucosamine (UDP-GlcNAc). The C-terminal domain catalyzes the transfer of acetyl group from acetyl coenzyme A to glucosamine-1-phosphate (GlcN-1-P) to produce N-acetylglucosamine-1-phosphate (GlcNAc-1-P), which is converted into UDP-GlcNAc by the transfer of uridine 5-monophosphate (from uridine 5-triphosphate), a reaction catalyzed by the N-terminal domain. In Oceanobacillus iheyensis (strain DSM 14371 / CIP 107618 / JCM 11309 / KCTC 3954 / HTE831), this protein is Bifunctional protein GlmU.